The following is a 529-amino-acid chain: Type I restriction enzyme StySJI methylase subunit (529 aa).

Residues 148–153 (QYFTPR), 178–180 (TAG), and Glu216 each bind S-adenosyl-L-methionine. Residues 405 to 444 (YGEDPHGLSPREEGEWSFNAEESEVADSEENKNTDQHQAT) form a disordered region. Residues 407–418 (EDPHGLSPREEG) show a composition bias toward basic and acidic residues.

This sequence belongs to the N(4)/N(6)-methyltransferase family. The type I restriction/modification system is composed of three polypeptides R, M and S; the restriction enzyme has stoichiometry R(2)M(2)S(1) while the methyltransferase is M(2)S(1).

The enzyme catalyses a 2'-deoxyadenosine in DNA + S-adenosyl-L-methionine = an N(6)-methyl-2'-deoxyadenosine in DNA + S-adenosyl-L-homocysteine + H(+). Functionally, the subtype gamma methyltransferase (M) subunit of a type I restriction enzyme. The M and S subunits together form a methyltransferase (MTase) that methylates two adenine residues of the sequence 5'-GAGN(6)GTRC-3'. In the presence of the R subunit the complex can also act as an endonuclease, binding to the same target sequence but cutting the DNA some distance from this site. Whether the DNA is cut or modified depends on the methylation state of the target sequence. When the target site is unmodified, the DNA is cut. When the target site is hemimethylated, the complex acts as a maintenance MTase modifying the DNA so that both strands become methylated. After locating a non-methylated recognition site, the enzyme complex serves as a molecular motor that translocates DNA in an ATP-dependent manner until a collision occurs that triggers cleavage. The chain is Type I restriction enzyme StySJI methylase subunit from Salmonella typhimurium (strain LT2 / SGSC1412 / ATCC 700720).